Here is a 182-residue protein sequence, read N- to C-terminus: Large ribosomal subunit protein uL22 (182 aa).

Residues 159–182 form a disordered region; it reads AAAKPKATAKKATGEKSKAKTKAN.

This sequence belongs to the universal ribosomal protein uL22 family. Part of the 50S ribosomal subunit.

Its function is as follows. This protein binds specifically to 23S rRNA; its binding is stimulated by other ribosomal proteins, e.g. L4, L17, and L20. It is important during the early stages of 50S assembly. It makes multiple contacts with different domains of the 23S rRNA in the assembled 50S subunit and ribosome. In terms of biological role, the globular domain of the protein is located near the polypeptide exit tunnel on the outside of the subunit, while an extended beta-hairpin is found that lines the wall of the exit tunnel in the center of the 70S ribosome. In Cytophaga hutchinsonii (strain ATCC 33406 / DSM 1761 / CIP 103989 / NBRC 15051 / NCIMB 9469 / D465), this protein is Large ribosomal subunit protein uL22.